The sequence spans 269 residues: Aquaporin-1 (269 aa).

The Cytoplasmic segment spans residues 1-11 (MASEIKKKLFW). The helical transmembrane segment at 12-29 (RAVVAEFLAMTLFVFISI) threads the bilayer. The Extracellular portion of the chain corresponds to 30 to 46 (GSALGFNYPLERNQTLV). An N-linked (GlcNAc...) asparagine glycan is attached at Asn-42. The helical transmembrane segment at 47-65 (QDNVKVSLAFGLSIATLAQ) threads the bilayer. The Cytoplasmic portion of the chain corresponds to 66–68 (SVG). The stretch at 69–82 (HISGAHLNPAVTLG) is an intramembrane region. An NPA 1 motif is present at residues 76–78 (NPA). Residues 83–90 (LLLSCQIS) lie on the Cytoplasmic side of the membrane. The chain crosses the membrane as a helical span at residues 91-109 (ILRAVMYIIAQCVGAIVAS). At 110-133 (AILSGITSSLLENSLGRNDLARGV) the chain is on the extracellular side. A helical transmembrane segment spans residues 134–153 (NSGQGLGIEIIGTLQLVLCV). The Cytoplasmic segment spans residues 154-163 (LATTDRRRRD). The helical transmembrane segment at 164–181 (LGGSAPLAIGLSVALGHL) threads the bilayer. Over 182 to 186 (LAIDY) the chain is Extracellular. The stretch at 187 to 199 (TGCGINPARSFGS) is an intramembrane region. The NPA 2 motif lies at 192–194 (NPA). Topologically, residues 200–206 (AVLTRNF) are extracellular. Asn-205 carries an N-linked (GlcNAc...) asparagine glycan. Residues 207–224 (SNHWIFWVGPFIGSALAV) form a helical membrane-spanning segment. The Cytoplasmic portion of the chain corresponds to 225-269 (LIYDFILAPRSSDFTDRMKVWTSGQVEEYDLDADDINSRVEMKPK). At Ser-247 the chain carries Phosphoserine. Tyr-253 carries the post-translational modification Phosphotyrosine. Ser-262 carries the phosphoserine modification.

Belongs to the MIP/aquaporin (TC 1.A.8) family. Homotetramer; each monomer provides an independent water pore. Component of the ankyrin-1 complex in the erythrocyte, composed of ANK1, RHCE, RHAG, SLC4A1, EPB42, GYPA, GYPB and AQP1. Interacts with EPHB2; involved in endolymph production in the inner ear. Identified in a complex with STOM. Interacts (via the N-terminal) with ANK1 (via ANK 1-5 repeats). Interacts (via the C-terminal) with EPB42. As to expression, erythrocytes and renal tubules.

It is found in the cell membrane. The enzyme catalyses H2O(in) = H2O(out). It carries out the reaction nitric oxide(out) = nitric oxide(in). It catalyses the reaction CO2(out) = CO2(in). The catalysed reaction is glycerol(in) = glycerol(out). The enzyme catalyses H2O2(out) = H2O2(in). It carries out the reaction K(+)(in) = K(+)(out). It catalyses the reaction Na(+)(in) = Na(+)(out). In terms of biological role, forms a water channel that facilitates the transport of water across cell membranes, playing a crucial role in water homeostasis in various tissues. Could also be permeable to small solutes including hydrogen peroxide, glycerol and gases such as amonnia (NH3), nitric oxide (NO) and carbon dioxide (CO2). Recruited to the ankyrin-1 complex, a multiprotein complex of the erythrocyte membrane, it could be part of a CO2 metabolon, linking facilitated diffusion of CO2 across the membrane, anion exchange of Cl(-)/HCO3(-) and interconversion of dissolved CO2 and carbonic acid in the cytosol. In vitro, it shows non-selective gated cation channel activity and may be permeable to cations like K(+) and Na(+) in vivo. The protein is Aquaporin-1 of Rattus norvegicus (Rat).